Reading from the N-terminus, the 122-residue chain is RING-box protein 1B (122 aa).

Positions 1–23 are enriched in acidic residues; the sequence is MAEEIEVEETEDFHDMDFNDEEP. A disordered region spans residues 1–28; sequence MAEEIEVEETEDFHDMDFNDEEPSCSGG. Residues cysteine 57, cysteine 60, cysteine 68, cysteine 71, cysteine 82, cysteine 89, histidine 91, histidine 94, histidine 96, cysteine 108, and aspartate 111 each contribute to the Zn(2+) site. The segment at 57–112 adopts an RING-type zinc-finger fold; the sequence is CAICRNHIMNLCIECQADPNANQDECTVAWGECNHAFHYHCIARWLKTRLVCPLDN.

It belongs to the RING-box family. Part of a SCF complex consisting of Skpa (SKP1), Cul1, Roc1B and a F-box protein. In terms of tissue distribution, highly expressed in early embryos, and in pupae. Widely expressed in adult males, while it is weakly expressed in adult females.

The protein localises to the cytoplasm. It is found in the nucleus. Its pathway is protein modification; protein ubiquitination. In terms of biological role, component of the SCF (SKP1-CUL1-F-box protein) E3 ubiquitin ligase complex, which mediates the ubiquitination and subsequent proteasomal degradation of target proteins. Through the RING-type zinc finger, seems to recruit the E2 ubiquitination enzyme to the complex and brings it into close proximity to the substrate. This Drosophila melanogaster (Fruit fly) protein is RING-box protein 1B (Roc1b).